The sequence spans 531 residues: Chaperonin GroEL 2 (531 aa).

Residues 30–33 (TLGP), 87–91 (DGTTT), glycine 414, and aspartate 494 contribute to the ATP site.

This sequence belongs to the chaperonin (HSP60) family. Forms a cylinder of 14 subunits composed of two heptameric rings stacked back-to-back. Interacts with the co-chaperonin GroES.

It is found in the cytoplasm. It carries out the reaction ATP + H2O + a folded polypeptide = ADP + phosphate + an unfolded polypeptide.. In terms of biological role, together with its co-chaperonin GroES, plays an essential role in assisting protein folding. The GroEL-GroES system forms a nano-cage that allows encapsulation of the non-native substrate proteins and provides a physical environment optimized to promote and accelerate protein folding. This chain is Chaperonin GroEL 2, found in Cutibacterium acnes (strain DSM 16379 / KPA171202) (Propionibacterium acnes).